Consider the following 7073-residue polypeptide: Replicase polyprotein 1ab (7073 aa).

Residues 1 to 2202 (MESLVLGVNE…NYVKSPKFSK (2202 aa)) lie on the Cytoplasmic side of the membrane. Residues 12 to 127 (THVQLSLPVL…YRNVLLRKNG (116 aa)) enclose the CoV Nsp1 globular domain. The BetaCoV Nsp1 C-terminal domain maps to 148 to 179 (ELGTDPIEDYEQNWNTKHGSGALRELTRELNG). Residues 183-456 (TRYVDNNFCG…NEDLLEILSR (274 aa)) form the CoV Nsp2 N-terminal domain. The Zn(2+) site is built by Cys-200, Cys-231, His-234, His-236, Cys-323, Cys-326, Cys-341, Cys-344, Cys-370, Cys-373, His-382, and Cys-416. Residues 200–236 (CIKDFLARAGKSMCTLSEQLDYIESKRGVYCCRDHEH) form a C2H2 region. Residues 323–344 (CNHCDEVSWQTCDFLKATCEHC) form a C4 region. Positions 370 to 416 (CPACQDPEIGPEHSVADYHNHSNIETRLRKGGRTRCFGGCVFAYVGC) are C2HC. Residues 458–688 (RVNINIVGDF…IDVVNKALEM (231 aa)) form the CoV Nsp2 middle domain. One can recognise a CoV Nsp2 C-terminal domain in the interval 690 to 818 (IDQVTIAGAK…TNNVFRLKGG (129 aa)). Positions 822–930 (KGVTFGEDTV…MYCSFYPPDE (109 aa)) constitute a Ubiquitin-like 1 domain. Disordered regions lie at residues 972–1003 (RVEE…EEPV) and 1175–1198 (RVEA…KSVV). Residues 974-999 (EEEEEEDWLDDTTEQSEIEPEPEPTP) are compositionally biased toward acidic residues. The Macro 1 domain maps to 1003 to 1169 (VNQFTGYLKL…LYEQVVMDYL (167 aa)). Macro domains are found at residues 1207-1335 (KIKA…LPSE) and 1343-1470 (ILGT…TSSS). The DPUP domain occupies 1472-1538 (TSEEHFVETV…SLDKLKSLLS (67 aa)). Positions 1542–1597 (VKTIKVFTTVDNTNLHTQLVDMSMTYGQQFGPTYLDGADVTKIKPHVNHEGKTFFV) constitute a Ubiquitin-like 2 domain. The 265-residue stretch at 1611–1875 (YYHTLDESFL…YTEIEPKLDG (265 aa)) folds into the Peptidase C16 domain. The active-site For PL-PRO activity is Cys-1651. Residues Cys-1729, Cys-1732, Cys-1764, and Cys-1766 each contribute to the Zn(2+) site. A C4-type zinc finger spans residues 1729–1766 (CKHCGQKTTTLTGVEAVMYMGTLSYDNLKTGVSIPCVC). Active-site for PL-PRO activity residues include His-1812 and Asp-1826. Residues 1888-1998 (PIDLVPTQPL…CLWSTKPVDT (111 aa)) form the Nucleic acid-binding domain. One can recognise a G2M domain in the interval 2023 to 2132 (PTSEEVVENP…LGQAAITTSN (110 aa)). A helical membrane pass occupies residues 2203 to 2223 (LFTIAMWLLLLSICLGSLICV). The interval 2203–2324 (LFTIAMWLLL…FYLLGLSAIM (122 aa)) is HD1. Residues 2224 to 2294 (TAAFGVLLSN…QVTISSYKLD (71 aa)) form the 3Ecto domain. Residues 2224–2303 (TAAFGVLLSN…DLTILGLAAE (80 aa)) lie on the Lumenal side of the membrane. 2 disulfides stabilise this stretch: Cys-2240/Cys-2268 and Cys-2259/Cys-2265. The chain crosses the membrane as a helical span at residues 2304 to 2324 (WVLAYMLFTKFFYLLGLSAIM). The Cytoplasmic segment spans residues 2325 to 2754 (QVFFGYFASH…TCFKLMLKAT (430 aa)). Residues 2372–2462 (KSYVHIMDGC…QFKRPINPTD (91 aa)) are Y1. One can recognise a CoV Nsp3 Y domain in the interval 2372–2740 (KSYVHIMDGC…ITTKISLKGG (369 aa)). Zn(2+)-binding residues include His-2376, Cys-2381, Cys-2386, Cys-2389, Cys-2422, His-2425, Cys-2429, and Cys-2432. Residues 2376-2389 (HIMDGCTSSTCMMC) are ZF1. The tract at residues 2422–2432 (CKTHNWNCLNC) is ZF2. The Y2 stretch occupies residues 2463-2557 (QSSYIVDSVA…LLDQALVSDV (95 aa)). Residues 2463–2740 (QSSYIVDSVA…ITTKISLKGG (278 aa)) form a coV-Y region. The Y3 stretch occupies residues 2558-2639 (GDSTEVSVKM…ECLKLSHHSD (82 aa)). The Y4 stretch occupies residues 2640-2740 (LEVTGDSCNN…ITTKISLKGG (101 aa)). The helical transmembrane segment at 2755 to 2775 (LLCVLAALVCYIVMPVHTLSI) threads the bilayer. The HD2 stretch occupies residues 2755–3125 (LLCVLAALVC…WITAIYVFCI (371 aa)). Topologically, residues 2776 to 3021 (HDGYTNEIIG…VQPVGALDVS (246 aa)) are lumenal. The chain crosses the membrane as a helical span at residues 3022–3042 (ASVVAGGIIAILVTCAAYYFM). Residues 3043–3076 (KFRRVFGEYNHVVAANALLFLMSFTILCLVPAYS) lie on the Cytoplasmic side of the membrane. A helical membrane pass occupies residues 3077–3097 (FLPGVYSVFYLYLTFYFTNDV). Topologically, residues 3098–3104 (SFLAHLQ) are lumenal. A helical transmembrane segment spans residues 3105–3125 (WFAMFSPIVPFWITAIYVFCI). Residues 3126–3563 (SLKHCHWFFN…KGTHHWMLLT (438 aa)) are Cytoplasmic-facing. The Nsp4C domain occupies 3142-3240 (VMFNGVTFST…QTSITSAVLQ (99 aa)). In terms of domain architecture, Peptidase C30 spans 3241 to 3546 (SGFRKMAFPS…VRQCSGVTFQ (306 aa)). Active-site for 3CL-PRO activity residues include His-3281 and Cys-3385. Residues 3564-3584 (FLTSLLILVQSTQWSLFFFVY) traverse the membrane as a helical segment. The segment at 3564–3776 (FLTSLLILVQ…CCCYFGLFCL (213 aa)) is HD3. A topological domain (lumenal) is located at residue Glu-3585. The chain crosses the membrane as a helical span at residues 3586–3606 (NAFLPFTLGIMAIAACAMLLV). Residues 3607 to 3611 (KHKHA) are Cytoplasmic-facing. A helical transmembrane segment spans residues 3612-3632 (FLCLFLLPSLATVAYFNMVYM). Residues 3633–3657 (PASWVMRIMTWLELADTSLSGYRLK) are Lumenal-facing. The helical transmembrane segment at 3658-3678 (DCVMYASALVLLILMTARTVY) threads the bilayer. The Cytoplasmic portion of the chain corresponds to 3679 to 3727 (DDAARRVWTLMNVITLVYKVYYGNALDQAISMWALVISVTSNYSGVVTT). The chain crosses the membrane as a helical span at residues 3728-3748 (IMFLARAIVFVCVEYYPLLFI). Residues 3749-3755 (TGNTLQC) are Lumenal-facing. A helical membrane pass occupies residues 3756 to 3776 (IMLVYCFLGYCCCCYFGLFCL). Residues 3777–7073 (LNRYFRLTLG…VVSSDILVNN (3297 aa)) are Cytoplasmic-facing. One can recognise a RdRp Nsp7 cofactor domain in the interval 3837 to 3919 (SKMSDVKCTS…EMLDNRATLQ (83 aa)). One can recognise a RdRp Nsp8 cofactor domain in the interval 3920–4117 (AIASEFSSLP…LRANSAVKLQ (198 aa)). One can recognise a Nsp9 ssRNA-binding domain in the interval 4118–4230 (NNELSPVALR…GSLAATVRLQ (113 aa)). Residues 4231–4369 (AGNATEVPAN…CDQLREPLMQ (139 aa)) form the ExoN/MTase coactivator domain. Zn(2+)-binding residues include Cys-4304, Cys-4307, His-4313, Cys-4320, Cys-4347, Cys-4350, Cys-4358, and Cys-4360. Zinc fingers lie at residues 4304–4320 (CLYC…KGFC) and 4347–4360 (CTVC…GCSC). Residues 4376–4630 (FLNRVCGVSA…AAESHMDADL (255 aa)) enclose the NiRAN domain. Mn(2+)-binding residues include Asn-4578 and Asp-4587. Residues 4635–4733 (IKWDLLKYDF…HNQDVNLHSS (99 aa)) enclose the Nsp12 Interface domain. Zn(2+) contacts are provided by His-4664, Cys-4670, Cys-4675, Cys-4679, and Cys-4856. In terms of domain architecture, Nsp12 RNA-dependent RNA polymerase spans 4734–5301 (RLSFKELLVY…AMYTPHTVLQ (568 aa)). The rdRp Fingers N-ter stretch occupies residues 4736–4950 (SFKELLVYAA…HQKLLKSIAA (215 aa)). Residues 4951–4989 (TRGATVVIGTSKFYGGWHNMLKTVYSDVETPHLMGWDYP) are rdRp Palm N-ter. The region spanning 4981-5143 (PHLMGWDYPK…CYNSNYAAQG (163 aa)) is the RdRp catalytic domain. Positions 4990–5048 (KCDRAMPNMLRIMASLVLARKHNTCCNLSHRFYRLANECAQVLSEMVMCGGSLYVKPGG) are rdRp Fingers C-ter. Zn(2+) contacts are provided by His-5011, Cys-5014, and Cys-5015. A rdRp Palm C-ter region spans residues 5049–5184 (TSSGDATTAY…TKGPHEFCSQ (136 aa)). Residues Ser-5128, Asp-5129, and Asp-5130 contribute to the active site. The tract at residues 5185 to 5301 (HTMLVKQGDD…AMYTPHTVLQ (117 aa)) is rdRp Thumb. The CV ZBD domain maps to 5302–5414 (AVGACVLCNS…TDFNAIATCD (113 aa)). 12 residues coordinate Zn(2+): Cys-5306, Cys-5309, Cys-5317, Cys-5320, Cys-5327, Cys-5330, His-5334, His-5340, Cys-5351, Cys-5356, Cys-5373, and His-5376. The 182-residue stretch at 5558-5739 (NISDEFSSNV…MKTIGPDMFL (182 aa)) folds into the (+)RNA virus helicase ATP-binding domain. An ATP-binding site is contributed by 5583–5590 (GPPGTGKS). Positions 5740-5909 (GTCRRCPAEI…TLQAENVTGL (170 aa)) constitute a (+)RNA virus helicase C-terminal domain. The ExoN domain maps to 5974–6189 (MFITREEAIR…RCLAVHECFV (216 aa)). Residues Asp-5992, Glu-5994, and Glu-6093 contribute to the active site. Mg(2+) is bound by residues Glu-5994 and Glu-6093. Cys-6109, Cys-6112, Cys-6128, His-6131, His-6159, Cys-6163, and His-6166 together coordinate Zn(2+). Residues His-6170 and Asp-6175 contribute to the active site. Positions 6170 and 6175 each coordinate Mg(2+). Cys-6181 lines the Zn(2+) pocket. An N7-MTase domain is found at 6198 to 6429 (YPIIGDELRV…NLWNTFTRLQ (232 aa)). 6233–6239 (DIGNPKA) contributes to the S-adenosyl-L-methionine binding site. A gpppA-binding region spans residues 6316 to 6330 (CDGGSLYVNKHAFHT). Residues Cys-6354, Cys-6375, Cys-6386, and His-6389 each coordinate Zn(2+). Residues 6430 to 6490 (SLENVAYNVV…NVAFELWAKR (61 aa)) form the Nsp15 N-terminal oligomerization domain. In terms of domain architecture, AV-Nsp11N/CoV-Nsp15M spans 6491–6616 (NIKPVPEIKI…YFKKVDGIIQ (126 aa)). Residues 6633-6772 (KPRSQMETDF…KDGHVETFYP (140 aa)) form the NendoU domain. Catalysis depends on residues His-6663, His-6678, Lys-6718, Lys-6821, Asp-6905, Lys-6945, and Glu-6978. The 295-residue stretch at 6777–7071 (SQAWQPGVAM…RVVVSSDILV (295 aa)) folds into the Nidovirus-type SAM-dependent 2'-O-MTase domain.

This sequence belongs to the coronaviruses polyprotein 1ab family. In terms of assembly, interacts with host PHB and PHB2. As to quaternary structure, interacts with papain-like protease nsp3 and non-structural protein 6. Monomer. Homodimer. Only the homodimer shows catalytic activity. In terms of assembly, interacts with nsp8 and nsp12 to form the replication-transcription complex (RTC): nsp12, nsp7, two subunits of nsp8, and up to two subunits of nsp13. Eight copies of nsp7 and eight copies of nsp8 assemble to form a heterohexadecamer dsRNA-encircling ring structure. As to quaternary structure, interacts with nsp7, nsp13 and nsp12 to form the replication-transcription complex (RTC): nsp12, nsp7, two subunits of nsp8, and up to two subunits of nsp13. Eight copies of nsp7 and eight copies of nsp8 assemble to form a heterohexadecamer dsRNA-encircling ring structure. Interacts with ORF6 protein. Homodimer. Interacts with nsp12. In terms of assembly, homododecamer. Interacts with proofreading exoribonuclease nsp14 and 2'-O-methyltransferase nsp16; these interactions enhance nsp14 and nsp16 enzymatic activities. As to quaternary structure, interacts with nsp7 and nsp8 to form the replication-transcription complex (RTC): nsp12, nsp7, two subunits of nsp8, and up to two subunits of nsp13. Interacts with nsp9. Interacts with nsp8 to form the replication-transcription complex (RTC): nsp12, nsp7, two subunits of nsp8, and up to two subunits of nsp13. In terms of assembly, interacts (via N-terminus) with host DDX1. Interacts with non-structural protein 10. As to quaternary structure, homohexamer. Interacts with nsp10. Requires Zn(2+) as cofactor. Mn(2+) serves as cofactor. It depends on Mg(2+) as a cofactor. Post-translationally, specific enzymatic cleavages in vivo by its own proteases yield mature proteins. 3C-like proteinase nsp5 liberates nsps 6-16 from the polyprotein. Papain-like and 3C-like proteinases are autocatalytically processed.

It is found in the host cytoplasm. The protein localises to the host endosome. Its subcellular location is the host membrane. It localises to the host Golgi apparatus. The protein resides in the host perinuclear region. It is found in the host endoplasmic reticulum. The protein localises to the host endoplasmic reticulum-Golgi intermediate compartment. The enzyme catalyses RNA(n) + a ribonucleoside 5'-triphosphate = RNA(n+1) + diphosphate. The catalysed reaction is ATP + H2O = ADP + phosphate + H(+). It carries out the reaction TSAVLQ-|-SGFRK-NH2 and SGVTFQ-|-GKFKK the two peptides corresponding to the two self-cleavage sites of the SARS 3C-like proteinase are the two most reactive peptide substrates. The enzyme exhibits a strong preference for substrates containing Gln at P1 position and Leu at P2 position.. It catalyses the reaction Thiol-dependent hydrolysis of ester, thioester, amide, peptide and isopeptide bonds formed by the C-terminal Gly of ubiquitin (a 76-residue protein attached to proteins as an intracellular targeting signal).. The enzyme catalyses a 5'-end (N(7)-methyl 5'-triphosphoguanosine)-ribonucleoside in mRNA + S-adenosyl-L-methionine = a 5'-end (N(7)-methyl 5'-triphosphoguanosine)-(2'-O-methyl-ribonucleoside) in mRNA + S-adenosyl-L-homocysteine + H(+). The catalysed reaction is uridylyl-uridylyl-ribonucleotide-RNA = a 3'-end uridylyl-2',3'-cyclophospho-uridine-RNA + a 5'-end dephospho-ribonucleoside-RNA. It carries out the reaction a 5'-end (5'-triphosphoguanosine)-ribonucleoside in mRNA + S-adenosyl-L-methionine = a 5'-end (N(7)-methyl 5'-triphosphoguanosine)-ribonucleoside in mRNA + S-adenosyl-L-homocysteine. It catalyses the reaction a 5'-end diphospho-ribonucleoside in mRNA + GTP + H(+) = a 5'-end (5'-triphosphoguanosine)-ribonucleoside in mRNA + diphosphate. Its activity is regulated as follows. Inhibited by Remdesivir (GS-5734). Its function is as follows. Multifunctional protein involved in the transcription and replication of viral RNAs. Contains the proteinases responsible for the cleavages of the polyprotein. Inhibits host translation by interacting with the 40S ribosomal subunit. The nsp1-40S ribosome complex further induces an endonucleolytic cleavage near the 5'UTR of host mRNAs, targeting them for degradation. Viral mRNAs are not susceptible to nsp1-mediated endonucleolytic RNA cleavage thanks to the presence of a 5'-end leader sequence and are therefore protected from degradation. By suppressing host gene expression, nsp1 facilitates efficient viral gene expression in infected cells and evasion from host immune response. May disrupt nuclear pore function by binding and displacing host NUP93. Functionally, may play a role in the modulation of host cell survival signaling pathway by interacting with host PHB and PHB2. Indeed, these two proteins play a role in maintaining the functional integrity of the mitochondria and protecting cells from various stresses. In terms of biological role, responsible for the cleavages located at the N-terminus of the replicase polyprotein. In addition, PL-PRO possesses a deubiquitinating/deISGylating activity and processes both 'Lys-48'- and 'Lys-63'-linked polyubiquitin chains from cellular substrates. Plays a role in host membrane rearrangement that leads to creation of cytoplasmic double-membrane vesicles (DMV) necessary for viral replication. Nsp3, nsp4 and nsp6 together are sufficient to form DMV. Antagonizes innate immune induction of type I interferon by blocking the phosphorylation, dimerization and subsequent nuclear translocation of host IRF3. Also prevents host NF-kappa-B signaling. Its function is as follows. Plays a role in host membrane rearrangement that leads to creation of cytoplasmic double-membrane vesicles (DMV) necessary for viral replication. Alone appears incapable to induce membrane curvature, but together with nsp3 is able to induce paired membranes. Nsp3, nsp4 and nsp6 together are sufficient to form DMV. Cleaves the C-terminus of replicase polyprotein at 11 sites. Recognizes substrates containing the core sequence [ILMVF]-Q-|-[SGACN]. May cleave human NLRP1 in lung epithelial cells, thereby activating the NLRP1 inflammasome pathway. Also able to bind an ADP-ribose-1''-phosphate (ADRP). May cleave host ATP6V1G1 thereby modifying host vacuoles intracellular pH. Functionally, plays a role in host membrane rearrangement that leads to creation of cytoplasmic double-membrane vesicles (DMV) necessary for viral replication. Nsp3, nsp4 and nsp6 together are sufficient to form DMV. Plays a role in the initial induction of autophagosomes from host endoplasmic reticulum. Later, limits the expansion of these phagosomes that are no longer able to deliver viral components to lysosomes. In terms of biological role, forms a hexadecamer with nsp8 (8 subunits of each) that may participate in viral replication by acting as a primase. Alternatively, may synthesize substantially longer products than oligonucleotide primers. Its function is as follows. Forms a hexadecamer with nsp7 (8 subunits of each) that may participate in viral replication by acting as a primase. Alternatively, may synthesize substantially longer products than oligonucleotide primers. Forms a primer, NSP9-pU, which is utilized by the polymerase for the initiation of RNA chains. Interacts with ribosome signal recognition particle RNA (SRP). Together with NSP8, suppress protein integration into the cell membrane, thereby disrupting host immune defenses. Functionally, plays a pivotal role in viral transcription by stimulating both nsp14 3'-5' exoribonuclease and nsp16 2'-O-methyltransferase activities. Therefore plays an essential role in viral mRNAs cap methylation. In terms of biological role, RNA-directed RNA polymerase that catalyzes the transcription of viral genomic and subgenomic RNAs. Acts in complex with nsp7 and nsp8 to transcribe both the minus and positive strands of genomic RNA. The kinase-like NiRAN domain of NSP12 attaches one or more nucleotides to the amino terminus of NSP9, forming a covalent RNA-protein intermediate that serves as transcription/replication primer. Subgenomic RNAs (sgRNAs) are formed by discontinuous transcription: The polymerase has the ability to pause at transcription-regulating sequences (TRS) and jump to the leader TRS, resulting in a major deletion. This creates a series of subgenomic RNAs that are replicated, transcribed and translated. In addition, Nsp12 is a subunit of the viral RNA capping enzyme that catalyzes the RNA guanylyltransferase reaction for genomic and sub-genomic RNAs. Subsequently, the NiRAN domain transfers RNA to GDP, and forms the core cap structure GpppA-RNA. Its function is as follows. Multi-functional protein with a zinc-binding domain in N-terminus displaying RNA and DNA duplex-unwinding activities with 5' to 3' polarity. Activity of helicase is dependent on magnesium. Plays a role in viral RNA synthesis through two distinct activities. The N7-guanine methyltransferase activity plays a role in the formation of the cap structure GpppA-RNA. The proofreading exoribonuclease reduces the sensitivity of the virus to RNA mutagens during replication. This activity acts on both ssRNA and dsRNA in a 3'-5' direction. Functionally, plays a role in viral transcription/replication and prevents the simultaneous activation of host cell dsRNA sensors, such as MDA5/IFIH1, OAS, and PKR. Acts by degrading the 5'-polyuridines generated during replication of the poly(A) region of viral genomic and subgenomic RNAs. Catalyzes a two-step reaction in which a 2'3'-cyclic phosphate (2'3'-cP) is first generated by 2'-O transesterification, which is then hydrolyzed to a 3'-phosphate (3'-P). If not degraded, poly(U) RNA would hybridize with poly(A) RNA tails and activate host dsRNA sensors. In terms of biological role, methyltransferase that mediates mRNA cap 2'-O-ribose methylation to the 5'-cap structure of viral mRNAs. N7-methyl guanosine cap is a prerequisite for binding of nsp16. Therefore plays an essential role in viral mRNAs cap methylation which is essential to evade immune system. This Severe acute respiratory syndrome coronavirus (SARS-CoV) protein is Replicase polyprotein 1ab (rep).